Reading from the N-terminus, the 286-residue chain is Putative type II secretion system L-type protein YghE (286 aa).

The helical transmembrane segment at 136–156 (VMILPILLILVALAVERGVTL) threads the bilayer.

It belongs to the GSP L family.

It localises to the cell inner membrane. Involved in a type II secretion system (T2SS, formerly general secretion pathway, GSP) for the export of folded proteins across the outer membrane. The protein is Putative type II secretion system L-type protein YghE of Escherichia coli (strain K12).